Reading from the N-terminus, the 142-residue chain is Large ribosomal subunit protein uL11 (142 aa).

The protein belongs to the universal ribosomal protein uL11 family. Part of the ribosomal stalk of the 50S ribosomal subunit. Interacts with L10 and the large rRNA to form the base of the stalk. L10 forms an elongated spine to which L12 dimers bind in a sequential fashion forming a multimeric L10(L12)X complex. Post-translationally, one or more lysine residues are methylated.

Functionally, forms part of the ribosomal stalk which helps the ribosome interact with GTP-bound translation factors. This Buchnera aphidicola subsp. Acyrthosiphon pisum (strain APS) (Acyrthosiphon pisum symbiotic bacterium) protein is Large ribosomal subunit protein uL11.